A 65-amino-acid chain; its full sequence is MLTVLGRLLERNSIYVATIFGGAFAFQGFFDVAVNKWWEEHNKAKLWKNVKGKFLEGEGEEEDDE.

A helical membrane pass occupies residues 14 to 34 (IYVATIFGGAFAFQGFFDVAV).

It belongs to the UQCR10/QCR9 family. In terms of assembly, component of the ubiquinol-cytochrome c oxidoreductase (cytochrome b-c1 complex, complex III, CIII), a multisubunit enzyme composed of 10 subunits. The complex is composed of 3 respiratory subunits cytochrome b (COB), cytochrome c1 (CYT1) and Rieske protein (RIP1), 2 core protein subunits COR1 and QCR2, and 5 low-molecular weight protein subunits QCR6, QCR7, QCR8, QCR9 and QCR10. The complex exists as an obligatory dimer and forms supercomplexes (SCs) in the inner mitochondrial membrane with a monomer or a dimer of cytochrome c oxidase (complex IV, CIV), resulting in 2 different assemblies (supercomplexes III(2)IV and III(2)IV(2)).

It localises to the membrane. Its subcellular location is the mitochondrion inner membrane. Its function is as follows. Component of the ubiquinol-cytochrome c oxidoreductase, a multisubunit transmembrane complex that is part of the mitochondrial electron transport chain which drives oxidative phosphorylation. The complex plays an important role in the uptake of multiple carbon sources present in different host niches. This Candida albicans (strain SC5314 / ATCC MYA-2876) (Yeast) protein is Cytochrome b-c1 complex subunit 9, mitochondrial.